A 205-amino-acid chain; its full sequence is Nitrophorin-7 (205 aa).

The signal sequence occupies residues 1-20 (MELYTALLAVTILSPSSIVG). Disulfide bonds link Cys25-Cys144 and Cys62-Cys193. Asp52 lines the histamine pocket. His80 and Asn91 together coordinate heme. Residue Asp154 coordinates histamine.

It belongs to the calycin superfamily. Nitrophorin family. Forms oligomers (at pH 5.5). Heme b serves as cofactor. In terms of tissue distribution, expressed in the endothelial cells of the salivary glands.

Its subcellular location is the secreted. The catalysed reaction is 3 nitrite + 2 H(+) = 2 nitric oxide + nitrate + H2O. Its function is as follows. Converts nitrite as the sole substrate to form nitric oxide gas (NO). NO(2-) serves both as an electron donor and as an electron acceptor. Binds to negatively charged cell surfaces of activated platelets; binds to L-a-phosphatidyl-L-serine (PS)-bearing phospholipid membranes. Once bound on an activated platelet, NP7 releases its stored nitric oxide gas (NO) into the victim's tissues while feeding, resulting in vasodilation and inhibition of platelet aggregation. Also acts as an anticoagulant by blocking coagulation-factor binding sites. Has antihistamine activity; binds histamine with high affinity. In Rhodnius prolixus (Triatomid bug), this protein is Nitrophorin-7.